Reading from the N-terminus, the 77-residue chain is Anionic peptide 17.1 (77 aa).

The signal sequence occupies residues 1-24 (MASKTVLVLLLVSVLVSTFCTAKA).

Belongs to the non-disulfide-bridged peptide (NDBP) superfamily. Long chain multifunctional peptide (group 2) family. As to expression, expressed by the venom gland.

The protein resides in the secreted. The protein is Anionic peptide 17.1 of Lychas mucronatus (Chinese swimming scorpion).